The sequence spans 244 residues: 1-(5-phosphoribosyl)-5-[(5-phosphoribosylamino)methylideneamino] imidazole-4-carboxamide isomerase (244 aa).

D8 acts as the Proton acceptor in catalysis. Catalysis depends on D130, which acts as the Proton donor.

The protein belongs to the HisA/HisF family.

The protein localises to the cytoplasm. The enzyme catalyses 1-(5-phospho-beta-D-ribosyl)-5-[(5-phospho-beta-D-ribosylamino)methylideneamino]imidazole-4-carboxamide = 5-[(5-phospho-1-deoxy-D-ribulos-1-ylimino)methylamino]-1-(5-phospho-beta-D-ribosyl)imidazole-4-carboxamide. Its pathway is amino-acid biosynthesis; L-histidine biosynthesis; L-histidine from 5-phospho-alpha-D-ribose 1-diphosphate: step 4/9. This chain is 1-(5-phosphoribosyl)-5-[(5-phosphoribosylamino)methylideneamino] imidazole-4-carboxamide isomerase, found in Hahella chejuensis (strain KCTC 2396).